Consider the following 335-residue polypeptide: Urokinase plasminogen activator surface receptor (335 aa).

The N-terminal stretch at 1 to 22 is a signal peptide; that stretch reads MGHPLLLPLLLLLHTCVPASWG. 3 UPAR/Ly6 domains span residues 23-114, 115-213, and 214-305; these read LRCM…RSRY, LECI…PQNG, and HQCY…YRKG. 3 cysteine pairs are disulfide-bonded: Cys-25–Cys-46, Cys-28–Cys-34, and Cys-39–Cys-67. Asn-74 carries an N-linked (GlcNAc...) asparagine glycan. 11 cysteine pairs are disulfide-bonded: Cys-93-Cys-98, Cys-117-Cys-144, Cys-120-Cys-127, Cys-137-Cys-169, Cys-175-Cys-192, Cys-193-Cys-198, Cys-216-Cys-244, Cys-219-Cys-227, Cys-237-Cys-263, Cys-269-Cys-287, and Cys-288-Cys-293. N-linked (GlcNAc...) asparagine glycosylation is found at Asn-184, Asn-194, Asn-222, Asn-255, and Asn-284. Gly-305 carries GPI-anchor amidated glycine lipidation. A propeptide spans 306-335 (removed in mature form); sequence AAPQPGPAHLSLTITLLMTARLWGGTLLWT.

As to quaternary structure, monomer. Interacts (via the UPAR/Ly6 domains) with SRPX2. Interacts with MRC2. Interacts with FAP (seprase); the interaction occurs at the cell surface of invadopodia membrane. Interacts with SORL1 (via N-terminal ectodomain); this interaction decreases PLAUR internalization. The ternary complex composed of PLAUR-PLAU-SERPINE1 also interacts with SORL1.

It is found in the cell membrane. Its subcellular location is the cell projection. The protein resides in the invadopodium membrane. In terms of biological role, acts as a receptor for urokinase plasminogen activator. Plays a role in localizing and promoting plasmin formation. Mediates the proteolysis-independent signal transduction activation effects of U-PA. It is subject to negative-feedback regulation by U-PA which cleaves it into an inactive form. The chain is Urokinase plasminogen activator surface receptor (PLAUR) from Macaca fascicularis (Crab-eating macaque).